The following is an 804-amino-acid chain: Protein SEY1 homolog 1 (804 aa).

The Cytoplasmic portion of the chain corresponds to 1–638; the sequence is MEQIITGEGQ…SVLASQNNEH (638 aa). One can recognise a GB1/RHD3-type G domain in the interval 28–245; that stretch reads GTDYHMVSII…EENYLFKEKS (218 aa). GTP is bound at residue 38–45; the sequence is GCQSSGKS. Residues 639–659 traverse the membrane as a helical segment; it reads IPPWAWFLFLFSCSDYILWWL. The Lumenal segment spans residues 660 to 662; the sequence is SNP. A helical membrane pass occupies residues 663–683; it reads LLFSLTVLFGGTYLVLNQLGL. The Cytoplasmic segment spans residues 684-804; that stretch reads WDTAVQKLLD…RKRVRVGTLV (121 aa). The disordered stretch occupies residues 706-804; sequence PDENNETETN…RKRVRVGTLV (99 aa). Over residues 751–791 the composition is skewed to polar residues; sequence QGLTKTESNVTFANVSNANDEQSLTKNNTEDSLNTGSSSSG. Residues 792-804 show a composition bias toward basic residues; it reads QRHRKRVRVGTLV.

Belongs to the TRAFAC class dynamin-like GTPase superfamily. GB1/RHD3 GTPase family. RHD3 subfamily.

The protein resides in the endoplasmic reticulum membrane. In terms of biological role, probable GTP-binding protein that may be involved in cell development. The polypeptide is Protein SEY1 homolog 1 (Trichomonas vaginalis (strain ATCC PRA-98 / G3)).